Reading from the N-terminus, the 634-residue chain is Chaperone protein HtpG (634 aa).

Positions 1-344 (MSETVSHNKE…SNDLPLNVSR (344 aa)) are a; substrate-binding. The interval 345–561 (EILQDNKVTQ…DFEMGTQMAK (217 aa)) is b. A c region spans residues 562–634 (LLEAAGQAVP…GAINKLLTKV (73 aa)).

The protein belongs to the heat shock protein 90 family. As to quaternary structure, homodimer.

The protein localises to the cytoplasm. Functionally, molecular chaperone. Has ATPase activity. This chain is Chaperone protein HtpG, found in Vibrio campbellii (strain ATCC BAA-1116).